A 61-amino-acid polypeptide reads, in one-letter code: Calprismin (61 aa).

In terms of processing, glycosylated. Expressed by the calcifying mantle epithelium and incorporated into the shell's calcitic prismatic layer.

In Pinna nobilis (Noble pen shell), this protein is Calprismin.